The following is a 440-amino-acid chain: Probable secretory pathway GDP dissociation inhibitor 1 (440 aa).

Belongs to the Rab GDI family.

The polypeptide is Probable secretory pathway GDP dissociation inhibitor 1 (gdi1) (Schizosaccharomyces pombe (strain 972 / ATCC 24843) (Fission yeast)).